The following is a 236-amino-acid chain: MLSSLLRRLARALFWFAAGSIVLVLVFRWVPPPGTALMVERKVQSWVSGEPIDLQRDWQPWESISDDLKVAVIAGEDQKFANHWGFDIPAIQAALAYNERGGNIRGASTLTQQVAKNLFLWSGRSWLRKGLEAWFTALIELFWSKERILEVYLNSAEWGKGVFGAQAAARYHFGIDASRLSRQQAAQLAAVLPSPIKWSASRPSAYVASRAGWIRRQMSQLGGPSYLMQLDASRRP.

A helical transmembrane segment spans residues 12–31 (ALFWFAAGSIVLVLVFRWVP).

This sequence belongs to the glycosyltransferase 51 family.

It localises to the cell inner membrane. The catalysed reaction is [GlcNAc-(1-&gt;4)-Mur2Ac(oyl-L-Ala-gamma-D-Glu-L-Lys-D-Ala-D-Ala)](n)-di-trans,octa-cis-undecaprenyl diphosphate + beta-D-GlcNAc-(1-&gt;4)-Mur2Ac(oyl-L-Ala-gamma-D-Glu-L-Lys-D-Ala-D-Ala)-di-trans,octa-cis-undecaprenyl diphosphate = [GlcNAc-(1-&gt;4)-Mur2Ac(oyl-L-Ala-gamma-D-Glu-L-Lys-D-Ala-D-Ala)](n+1)-di-trans,octa-cis-undecaprenyl diphosphate + di-trans,octa-cis-undecaprenyl diphosphate + H(+). It functions in the pathway cell wall biogenesis; peptidoglycan biosynthesis. Its function is as follows. Peptidoglycan polymerase that catalyzes glycan chain elongation from lipid-linked precursors. The protein is Biosynthetic peptidoglycan transglycosylase of Pseudomonas putida (strain W619).